Reading from the N-terminus, the 159-residue chain is MIDPDGFRPNVGIILTNDAGQVLWARRINQDAWQFPQGGINPDETPEDALYRELNEEVGLERDDVEILACTRGWLRYRLPQRLVRTHSQPLCIGQKQKWFLLRLVSNEQRVRMDLTGKPEFDGWRWVSYWYPLGQVVTFKREVYRRALKELAPRLLTRD.

Positions 6 to 149 constitute a Nudix hydrolase domain; sequence GFRPNVGIIL…KREVYRRALK (144 aa). Residues 38–59 carry the Nudix box motif; the sequence is GGINPDETPEDALYRELNEEVG.

This sequence belongs to the Nudix hydrolase family. RppH subfamily. It depends on a divalent metal cation as a cofactor.

Its function is as follows. Accelerates the degradation of transcripts by removing pyrophosphate from the 5'-end of triphosphorylated RNA, leading to a more labile monophosphorylated state that can stimulate subsequent ribonuclease cleavage. This is RNA pyrophosphohydrolase from Pseudomonas entomophila (strain L48).